Reading from the N-terminus, the 223-residue chain is Cytidylate kinase (223 aa).

10-18 contacts ATP; that stretch reads GPAGTGKSS.

This sequence belongs to the cytidylate kinase family. Type 1 subfamily.

It is found in the cytoplasm. The catalysed reaction is CMP + ATP = CDP + ADP. The enzyme catalyses dCMP + ATP = dCDP + ADP. This Mycobacterium leprae (strain Br4923) protein is Cytidylate kinase.